The sequence spans 351 residues: Nicotinate-nucleotide--dimethylbenzimidazole phosphoribosyltransferase (351 aa).

Catalysis depends on E317, which acts as the Proton acceptor.

It belongs to the CobT family.

It catalyses the reaction 5,6-dimethylbenzimidazole + nicotinate beta-D-ribonucleotide = alpha-ribazole 5'-phosphate + nicotinate + H(+). The protein operates within nucleoside biosynthesis; alpha-ribazole biosynthesis; alpha-ribazole from 5,6-dimethylbenzimidazole: step 1/2. In terms of biological role, catalyzes the synthesis of alpha-ribazole-5'-phosphate from nicotinate mononucleotide (NAMN) and 5,6-dimethylbenzimidazole (DMB). This is Nicotinate-nucleotide--dimethylbenzimidazole phosphoribosyltransferase from Pseudomonas putida (strain GB-1).